The primary structure comprises 343 residues: Anthranilate phosphoribosyltransferase (343 aa).

5-phospho-alpha-D-ribose 1-diphosphate is bound by residues Gly-84, 87-88 (GD), Thr-92, 94-97 (NIST), 112-120 (KHGNRSASS), and Ser-124. Anthranilate is bound at residue Gly-84. Ser-96 lines the Mg(2+) pocket. Asn-115 contributes to the anthranilate binding site. Residue Arg-170 coordinates anthranilate. Residues Asp-229 and Glu-230 each coordinate Mg(2+).

Belongs to the anthranilate phosphoribosyltransferase family. In terms of assembly, homodimer. The cofactor is Mg(2+).

The catalysed reaction is N-(5-phospho-beta-D-ribosyl)anthranilate + diphosphate = 5-phospho-alpha-D-ribose 1-diphosphate + anthranilate. It functions in the pathway amino-acid biosynthesis; L-tryptophan biosynthesis; L-tryptophan from chorismate: step 2/5. Functionally, catalyzes the transfer of the phosphoribosyl group of 5-phosphorylribose-1-pyrophosphate (PRPP) to anthranilate to yield N-(5'-phosphoribosyl)-anthranilate (PRA). This chain is Anthranilate phosphoribosyltransferase, found in Bordetella bronchiseptica (strain ATCC BAA-588 / NCTC 13252 / RB50) (Alcaligenes bronchisepticus).